The primary structure comprises 325 residues: Peroxidase 47 (325 aa).

The first 36 residues, 1–36 (MLTRFKKQNNKMVRANIVSMVLLMHAIVGFPFHARG), serve as a signal peptide directing secretion. Disulfide bonds link cysteine 46-cysteine 125, cysteine 79-cysteine 84, cysteine 131-cysteine 321, and cysteine 209-cysteine 235. Histidine 77 (proton acceptor) is an active-site residue. 4 residues coordinate Ca(2+): aspartate 78, glycine 83, aspartate 85, and serine 87. Position 172 (proline 172) interacts with substrate. The N-linked (GlcNAc...) asparagine glycan is linked to asparagine 177. Residue histidine 202 participates in heme b binding. Threonine 203 provides a ligand contact to Ca(2+). Aspartate 246, threonine 248, and aspartate 253 together coordinate Ca(2+).

This sequence belongs to the peroxidase family. Classical plant (class III) peroxidase subfamily. Requires heme b as cofactor. It depends on Ca(2+) as a cofactor.

The protein resides in the secreted. It carries out the reaction 2 a phenolic donor + H2O2 = 2 a phenolic radical donor + 2 H2O. Functionally, removal of H(2)O(2), oxidation of toxic reductants, biosynthesis and degradation of lignin, suberization, auxin catabolism, response to environmental stresses such as wounding, pathogen attack and oxidative stress. These functions might be dependent on each isozyme/isoform in each plant tissue. The chain is Peroxidase 47 (PER47) from Arabidopsis thaliana (Mouse-ear cress).